The sequence spans 205 residues: Dephospho-CoA kinase (205 aa).

One can recognise a DPCK domain in the interval 7-205 (IIGVTGRIAS…QGIINYERFE (199 aa)). Residue 15–20 (ASGKDT) coordinates ATP.

This sequence belongs to the CoaE family.

The protein localises to the cytoplasm. The enzyme catalyses 3'-dephospho-CoA + ATP = ADP + CoA + H(+). Its pathway is cofactor biosynthesis; coenzyme A biosynthesis; CoA from (R)-pantothenate: step 5/5. Functionally, catalyzes the phosphorylation of the 3'-hydroxyl group of dephosphocoenzyme A to form coenzyme A. The protein is Dephospho-CoA kinase of Borreliella burgdorferi (strain ATCC 35210 / DSM 4680 / CIP 102532 / B31) (Borrelia burgdorferi).